A 445-amino-acid polypeptide reads, in one-letter code: Na(+)-translocating NADH-quinone reductase subunit A (445 aa).

It belongs to the NqrA family. Composed of six subunits; NqrA, NqrB, NqrC, NqrD, NqrE and NqrF.

The enzyme catalyses a ubiquinone + n Na(+)(in) + NADH + H(+) = a ubiquinol + n Na(+)(out) + NAD(+). Functionally, NQR complex catalyzes the reduction of ubiquinone-1 to ubiquinol by two successive reactions, coupled with the transport of Na(+) ions from the cytoplasm to the periplasm. NqrA to NqrE are probably involved in the second step, the conversion of ubisemiquinone to ubiquinol. The polypeptide is Na(+)-translocating NADH-quinone reductase subunit A (Pseudomonas aeruginosa (strain ATCC 15692 / DSM 22644 / CIP 104116 / JCM 14847 / LMG 12228 / 1C / PRS 101 / PAO1)).